Here is a 218-residue protein sequence, read N- to C-terminus: Small ribosomal subunit protein uS3 (218 aa).

The KH type-2 domain maps to 43 to 113 (IREHIERKLA…KVQVNVREVS (71 aa)).

This sequence belongs to the universal ribosomal protein uS3 family. As to quaternary structure, part of the 30S ribosomal subunit. Forms a tight complex with proteins S10 and S14.

In terms of biological role, binds the lower part of the 30S subunit head. Binds mRNA in the 70S ribosome, positioning it for translation. This chain is Small ribosomal subunit protein uS3, found in Rubrobacter xylanophilus (strain DSM 9941 / JCM 11954 / NBRC 16129 / PRD-1).